Consider the following 495-residue polypeptide: YTH domain-containing protein ECT3 (495 aa).

The YTH domain occupies 261–398; the sequence is AKFYVIKSYS…EQGIKVIKIF (138 aa). RNA is bound by residues 267–269, aspartate 273, 283–284, asparagine 316, tryptophan 340, tryptophan 345, and tryptophan 353; these read KSY and WS.

Expressed in the shoot apex, at the sites of leaf formation, and in emerging leaves.

Its subcellular location is the cytoplasm. In terms of biological role, specifically recognizes and binds N6-methyladenosine (m6A)-containing RNAs, and regulates mRNA stability. M6A is a modification present at internal sites of mRNAs and some non-coding RNAs and plays a role in mRNA stability and processing. Required for the correct timing of leaf formation and normal leaf morphology. Required for proper trichome branching and morphology. Functions redundantly with ECT2. This chain is YTH domain-containing protein ECT3, found in Arabidopsis thaliana (Mouse-ear cress).